The chain runs to 163 residues: Small ribosomal subunit protein uS9 (163 aa).

Over residues 1–25 (MAENTNNSAVTETEETTAAFTTETN) the composition is skewed to low complexity. Positions 1–40 (MAENTNNSAVTETEETTAAFTTETNSGAGTGTSTIAPGYG) are disordered.

The protein belongs to the universal ribosomal protein uS9 family.

This is Small ribosomal subunit protein uS9 from Bifidobacterium animalis subsp. lactis (strain AD011).